An 84-amino-acid polypeptide reads, in one-letter code: Putative membrane protein insertion efficiency factor (84 aa).

Residues 64–84 form a disordered region; the sequence is GGSGYDPPPPRHQPRKWKCEE. Over residues 75–84 the composition is skewed to basic residues; the sequence is HQPRKWKCEE.

The protein belongs to the UPF0161 family.

The protein resides in the cell inner membrane. In terms of biological role, could be involved in insertion of integral membrane proteins into the membrane. This chain is Putative membrane protein insertion efficiency factor, found in Caulobacter vibrioides (strain ATCC 19089 / CIP 103742 / CB 15) (Caulobacter crescentus).